The sequence spans 301 residues: UDP-N-acetylenolpyruvoylglucosamine reductase (301 aa).

One can recognise an FAD-binding PCMH-type domain in the interval Val-30–Gly-194. The active site involves Arg-173. Ser-223 serves as the catalytic Proton donor. Residue Glu-293 is part of the active site.

This sequence belongs to the MurB family. Requires FAD as cofactor.

It localises to the cytoplasm. It carries out the reaction UDP-N-acetyl-alpha-D-muramate + NADP(+) = UDP-N-acetyl-3-O-(1-carboxyvinyl)-alpha-D-glucosamine + NADPH + H(+). It participates in cell wall biogenesis; peptidoglycan biosynthesis. Cell wall formation. In Streptococcus pneumoniae (strain JJA), this protein is UDP-N-acetylenolpyruvoylglucosamine reductase.